A 134-amino-acid chain; its full sequence is Small ribosomal subunit protein bS6 (134 aa).

Positions 103 to 134 are disordered; sequence AAPVKSAEEGTEEVAAEAATEAPAETTTTVEV. Residues 118 to 134 are compositionally biased toward low complexity; it reads AEAATEAPAETTTTVEV.

The protein belongs to the bacterial ribosomal protein bS6 family.

Binds together with bS18 to 16S ribosomal RNA. In Geobacter sp. (strain M21), this protein is Small ribosomal subunit protein bS6.